The following is a 380-amino-acid chain: Succinate--CoA ligase [ADP-forming] subunit beta (380 aa).

The ATP-grasp domain occupies 9 to 236 (KGVFADAGIP…EAAGDELEAK (228 aa)). ATP is bound by residues lysine 45, 52–54 (GRG), glutamate 91, valine 94, and glutamate 99. Mg(2+) is bound by residues asparagine 191 and aspartate 205. Substrate-binding positions include asparagine 256 and 313–315 (GIT).

Belongs to the succinate/malate CoA ligase beta subunit family. In terms of assembly, heterotetramer of two alpha and two beta subunits. Mg(2+) is required as a cofactor.

It carries out the reaction succinate + ATP + CoA = succinyl-CoA + ADP + phosphate. It catalyses the reaction GTP + succinate + CoA = succinyl-CoA + GDP + phosphate. Its pathway is carbohydrate metabolism; tricarboxylic acid cycle; succinate from succinyl-CoA (ligase route): step 1/1. Functionally, succinyl-CoA synthetase functions in the citric acid cycle (TCA), coupling the hydrolysis of succinyl-CoA to the synthesis of either ATP or GTP and thus represents the only step of substrate-level phosphorylation in the TCA. The beta subunit provides nucleotide specificity of the enzyme and binds the substrate succinate, while the binding sites for coenzyme A and phosphate are found in the alpha subunit. The polypeptide is Succinate--CoA ligase [ADP-forming] subunit beta (Natronomonas pharaonis (strain ATCC 35678 / DSM 2160 / CIP 103997 / JCM 8858 / NBRC 14720 / NCIMB 2260 / Gabara) (Halobacterium pharaonis)).